The sequence spans 110 residues: Large ribosomal subunit protein uL22 (110 aa).

Belongs to the universal ribosomal protein uL22 family. As to quaternary structure, part of the 50S ribosomal subunit.

Functionally, this protein binds specifically to 23S rRNA; its binding is stimulated by other ribosomal proteins, e.g. L4, L17, and L20. It is important during the early stages of 50S assembly. It makes multiple contacts with different domains of the 23S rRNA in the assembled 50S subunit and ribosome. Its function is as follows. The globular domain of the protein is located near the polypeptide exit tunnel on the outside of the subunit, while an extended beta-hairpin is found that lines the wall of the exit tunnel in the center of the 70S ribosome. The protein is Large ribosomal subunit protein uL22 of Halorhodospira halophila (strain DSM 244 / SL1) (Ectothiorhodospira halophila (strain DSM 244 / SL1)).